A 990-amino-acid chain; its full sequence is Presequence protease, mitochondrial (990 aa).

The N-terminal 25 residues, 1 to 25 (MLRLKSLKKPVQAVVRRFATTSAPT), are a transit peptide targeting the mitochondrion. Histidine 89 provides a ligand contact to Zn(2+). Glutamate 92 serves as the catalytic Proton acceptor. A Zn(2+)-binding site is contributed by histidine 93. Glutamate 165 is an active-site residue. Residue glutamate 190 participates in Zn(2+) binding.

This sequence belongs to the peptidase M16 family. PreP subfamily. Monomer and homodimer; homodimerization is induced by binding of the substrate. Zn(2+) is required as a cofactor.

Its subcellular location is the mitochondrion intermembrane space. It localises to the mitochondrion matrix. Its function is as follows. Degrades mitochondrial transit peptides after their cleavage in the intermembrane space or in the matrix, and presequence peptides; clearance of these peptides is required to keep the presequence processing machinery running. Preferentially cleaves the N-terminal side of paired basic amino acid residues. Also degrades other unstructured peptides. May function as an ATP-dependent peptidase as opposed to a metalloendopeptidase. The chain is Presequence protease, mitochondrial (CYM1) from Yarrowia lipolytica (strain CLIB 122 / E 150) (Yeast).